Reading from the N-terminus, the 142-residue chain is Large ribosomal subunit protein uL13 (142 aa).

The protein belongs to the universal ribosomal protein uL13 family. In terms of assembly, part of the 50S ribosomal subunit.

In terms of biological role, this protein is one of the early assembly proteins of the 50S ribosomal subunit, although it is not seen to bind rRNA by itself. It is important during the early stages of 50S assembly. This chain is Large ribosomal subunit protein uL13, found in Buchnera aphidicola subsp. Cinara cedri (strain Cc).